The primary structure comprises 381 residues: Chaperone protein DnaJ (381 aa).

Positions 5–70 constitute a J domain; the sequence is DFYEVLGVSR…QKKAAYDQYG (66 aa). The segment at 136–214 adopts a CR-type zinc-finger fold; that stretch reads GVSKEIEVPT…CHGQGRKQKT (79 aa). Residues Cys-149, Cys-152, Cys-166, Cys-169, Cys-188, Cys-191, Cys-202, and Cys-205 each contribute to the Zn(2+) site. CXXCXGXG motif repeat units follow at residues 149 to 156, 166 to 173, 188 to 195, and 202 to 209; these read CDICDGSG, CGTCHGHG, CPTCNGKG, and CNSCHGQG.

Belongs to the DnaJ family. As to quaternary structure, homodimer. Zn(2+) serves as cofactor.

The protein resides in the cytoplasm. Participates actively in the response to hyperosmotic and heat shock by preventing the aggregation of stress-denatured proteins and by disaggregating proteins, also in an autonomous, DnaK-independent fashion. Unfolded proteins bind initially to DnaJ; upon interaction with the DnaJ-bound protein, DnaK hydrolyzes its bound ATP, resulting in the formation of a stable complex. GrpE releases ADP from DnaK; ATP binding to DnaK triggers the release of the substrate protein, thus completing the reaction cycle. Several rounds of ATP-dependent interactions between DnaJ, DnaK and GrpE are required for fully efficient folding. Also involved, together with DnaK and GrpE, in the DNA replication of plasmids through activation of initiation proteins. In Vibrio atlanticus (strain LGP32) (Vibrio splendidus (strain Mel32)), this protein is Chaperone protein DnaJ.